The primary structure comprises 209 residues: Glutathione S-transferase F7 (209 aa).

In terms of domain architecture, GST N-terminal spans 2–83 (AGIKVFGHPA…YIAHFYSDKG (82 aa)). Glutathione-binding positions include 12-13 (ST), 41-42 (HK), 54-55 (KV), and 67-68 (ES). The region spanning 90 to 209 (GSKDIAGIAM…TSRPSAKKVL (120 aa)) is the GST C-terminal domain.

The protein belongs to the GST superfamily. Phi family.

It is found in the cytoplasm. The protein resides in the cytosol. It catalyses the reaction RX + glutathione = an S-substituted glutathione + a halide anion + H(+). Its function is as follows. May be involved in the conjugation of reduced glutathione to a wide number of exogenous and endogenous hydrophobic electrophiles and have a detoxification role against certain herbicides. The polypeptide is Glutathione S-transferase F7 (Arabidopsis thaliana (Mouse-ear cress)).